We begin with the raw amino-acid sequence, 205 residues long: MRDRFEEQALALGAAMQALGLVRELATAGRLDDAQAEPLMSSLVKPYEGDLDRLYGGPTALAPGLRRLVTQLTNPQSMESTRYLAGVMHLEKKLSKNRAMLGQLGEGLEAARRQADYFHPLHENVLRNLGALYGETISQLGPRIMVRGDPGHLQDERIAAGIRTMLLAAIRAASLWRECGGGKLTLILRRQRLVQAAHALLERVD.

It belongs to the HflD family.

Its subcellular location is the cytoplasm. The protein resides in the cell inner membrane. In Alkalilimnicola ehrlichii (strain ATCC BAA-1101 / DSM 17681 / MLHE-1), this protein is High frequency lysogenization protein HflD homolog.